Here is a 124-residue protein sequence, read N- to C-terminus: Phosphoribosyl-ATP pyrophosphatase (124 aa).

Belongs to the PRA-PH family.

Its subcellular location is the cytoplasm. It catalyses the reaction 1-(5-phospho-beta-D-ribosyl)-ATP + H2O = 1-(5-phospho-beta-D-ribosyl)-5'-AMP + diphosphate + H(+). It participates in amino-acid biosynthesis; L-histidine biosynthesis; L-histidine from 5-phospho-alpha-D-ribose 1-diphosphate: step 2/9. This is Phosphoribosyl-ATP pyrophosphatase from Ralstonia pickettii (strain 12J).